The sequence spans 240 residues: Probable transcriptional regulatory protein MS53_0373 (240 aa).

Belongs to the TACO1 family.

It localises to the cytoplasm. This is Probable transcriptional regulatory protein MS53_0373 from Mycoplasmopsis synoviae (strain 53) (Mycoplasma synoviae).